Reading from the N-terminus, the 259-residue chain is Kallikrein 1-related peptidase b22 (259 aa).

The signal sequence occupies residues 1–17 (MRFLILFLTLSLGGIDA). The propeptide at 18-24 (APPVQSR) is activation peptide. The region spanning 25–256 (ILGGFKCEKN…FTSWIKDTMA (232 aa)) is the Peptidase S1 domain. 5 disulfides stabilise this stretch: Cys31–Cys171, Cys50–Cys66, Cys150–Cys217, Cys182–Cys196, and Cys207–Cys232. The active-site Charge relay system is the His65. Asn102 is a glycosylation site (N-linked (GlcNAc...) asparagine). Residue Asp118 is the Charge relay system of the active site. The active-site Charge relay system is the Ser211.

It belongs to the peptidase S1 family. Kallikrein subfamily.

It catalyses the reaction Preferential cleavage of Arg-|-Xaa bonds in small molecule substrates. Highly selective action to release kallidin (lysyl-bradykinin) from kininogen involves hydrolysis of Met-|-Xaa or Leu-|-Xaa.. Its function is as follows. Glandular kallikreins cleave Met-Lys and Arg-Ser bonds in kininogen to release Lys-bradykinin. The sequence is that of Kallikrein 1-related peptidase b22 (Klk1b22) from Mus musculus (Mouse).